The sequence spans 761 residues: Ribonucleoside-diphosphate reductase 1 subunit alpha (761 aa).

Residues 5–95 (LLVTKRDGRT…IFHLRKKAFG (91 aa)) form the ATP-cone domain. Residues Lys-9, 15-21 (ERINLDK), Thr-55, and Lys-91 contribute to the ATP site. Thr-209 contributes to the GDP binding site. Residues Cys-225 and Cys-462 are joined by a disulfide bond. DTTP contacts are provided by residues 232-234 (DSL), Arg-262, and Arg-269. Asn-437 is a binding site for GDP. Asn-437 serves as the catalytic Proton acceptor. Cys-439 serves as the catalytic Cysteine radical intermediate. Residues Glu-441 and 623 to 625 (ETS) contribute to the GDP site. The Proton acceptor role is filled by Glu-441.

It belongs to the ribonucleoside diphosphate reductase large chain family. As to quaternary structure, tetramer of two alpha (R1) and two beta (R2) subunits. The B1 protein is a dimer of alpha subunits. A radical transfer pathway occurs between 'Tyr-122' of R2 and R1.

The enzyme catalyses a 2'-deoxyribonucleoside 5'-diphosphate + [thioredoxin]-disulfide + H2O = a ribonucleoside 5'-diphosphate + [thioredoxin]-dithiol. With respect to regulation, under complex allosteric control mediated by deoxynucleoside triphosphates and ATP binding to separate specificity and activation sites on the alpha subunit. The type of nucleotide bound at the specificity site determines substrate preference. It seems probable that ATP makes the enzyme reduce CDP and UDP, dGTP favors ADP reduction and dTTP favors GDP reduction. Stimulated by ATP and inhibited by dATP binding to the activity site. Provides the precursors necessary for DNA synthesis. Catalyzes the biosynthesis of deoxyribonucleotides from the corresponding ribonucleotides. R1 contains the binding sites for both substrates and allosteric effectors and carries out the actual reduction of the ribonucleotide. This Salmonella typhimurium (strain LT2 / SGSC1412 / ATCC 700720) protein is Ribonucleoside-diphosphate reductase 1 subunit alpha (nrdA).